The following is a 560-amino-acid chain: Thermosome subunit alpha (560 aa).

The span at Ser535–Ser547 shows a compositional bias: basic and acidic residues. The segment at Ser535–Asp560 is disordered.

It belongs to the TCP-1 chaperonin family. Forms a heterooligomeric complex of two stacked nine-membered rings; one of alpha and the other of beta subunits. Sometimes called a 'rosettasome'.

It is found in the cytoplasm. The enzyme catalyses ATP + H2O = ADP + phosphate + H(+). In terms of biological role, molecular chaperone; binds unfolded polypeptides in vitro, stimulates protein folding and has ATPase activity. One of the most abundant proteins in the cell at all temperatures. The chain is Thermosome subunit alpha (thsA) from Saccharolobus shibatae (strain ATCC 51178 / DSM 5389 / JCM 8931 / NBRC 15437 / B12) (Sulfolobus shibatae).